The following is a 462-amino-acid chain: L-seryl-tRNA(Sec) selenium transferase (462 aa).

An N6-(pyridoxal phosphate)lysine modification is found at Lys292.

Belongs to the SelA family. Pyridoxal 5'-phosphate is required as a cofactor.

Its subcellular location is the cytoplasm. It carries out the reaction L-seryl-tRNA(Sec) + selenophosphate + H(+) = L-selenocysteinyl-tRNA(Sec) + phosphate. It functions in the pathway aminoacyl-tRNA biosynthesis; selenocysteinyl-tRNA(Sec) biosynthesis; selenocysteinyl-tRNA(Sec) from L-seryl-tRNA(Sec) (bacterial route): step 1/1. Its function is as follows. Converts seryl-tRNA(Sec) to selenocysteinyl-tRNA(Sec) required for selenoprotein biosynthesis. This is L-seryl-tRNA(Sec) selenium transferase from Clostridium perfringens (strain 13 / Type A).